A 970-amino-acid polypeptide reads, in one-letter code: Polycystin-2 (970 aa).

The segment covering 1-11 (MVNSSRVQPQQ) has biased composition (polar residues). The segment at 1-182 (MVNSSRVQPQ…GDPLHRHLPL (182 aa)) is disordered. Residues 1–221 (MVNSSRVQPQ…STDREKYLKS (221 aa)) lie on the Cytoplasmic side of the membrane. A compositionally biased stretch (low complexity) spans 25–45 (GPGRLMAGGAIAGAGLAAPGG). Over residues 47 to 60 (REQRGLEIEMERIR) the composition is skewed to basic and acidic residues. Over residues 62 to 83 (AAARDPPAGASASPSPPLSSCS) the composition is skewed to low complexity. Phosphoserine is present on residues Ser76 and Ser80. The span at 95 to 109 (EAEEEEEEEEVEGEE) shows a compositional bias: acidic residues. Residues 125–138 (RRSASSSAVSSAGA) are compositionally biased toward low complexity. Arg139 carries the post-translational modification Omega-N-methylarginine. Positions 139–148 (RGRGLGGYHG) are enriched in gly residues. The chain crosses the membrane as a helical span at residues 222–243 (VLRELATYLLFLIVLCILTYGM). At 244–470 (MSSSVYYYTR…PVKLIRYVTT (227 aa)) the chain is on the extracellular side. Asn301, Asn307, and Asn330 each carry an N-linked (GlcNAc...) asparagine glycan. A disulfide bond links Cys333 and Cys346. Residues Asn364 and Asn377 are each glycosylated (N-linked (GlcNAc...) asparagine). Residues 471–491 (FDFFLAACEIIFCLFILYYVV) form a helical membrane-spanning segment. The Cytoplasmic portion of the chain corresponds to 492-507 (EEILEIRIHKLHYFRS). Residues 508–528 (FWNCLDVVIIVLSVVAIGINI) traverse the membrane as a helical segment. The Extracellular portion of the chain corresponds to 529–554 (YRTSNVEALLQFLEDQNTFPNFENLA). The chain crosses the membrane as a helical span at residues 555–575 (YWQTQFNNIAAVIVFFVWIKL). Gln559 lines the cholesterol pocket. At 576–599 (FKFINFNRTMSQLSTTMSRCAKDL) the chain is on the cytoplasmic side. The helical transmembrane segment at 600-621 (FGFAIMFFIIFLAYAQLAYLVF) threads the bilayer. At 622 to 633 (GTQVDDFSTFQE) the chain is on the extracellular side. An intramembrane region (pore-forming) is located at residues 634–648 (CIFTQFRIILGDINF). Leu643 contacts Ca(2+). The Selectivity filter motif lies at 643-645 (LGD). Residues 649-656 (AEIEEANR) are Extracellular-facing. A helical transmembrane segment spans residues 657–677 (VLGPIYFTTFVFFMFFILLNM). At 678-970 (FLAIINDTYS…GGNGSANIHV (293 aa)) the chain is on the cytoplasmic side. The region spanning 750-785 (KGHTDAEIEAIFTKYDQDGDQELTEHEHQQMRDDLE) is the EF-hand domain. The Ca(2+) site is built by Asp765, Asp767, Asp769, Glu771, and Glu776. The segment at 766 to 833 (QDGDQELTEH…HSSRRRGSIS (68 aa)) is disordered. A compositionally biased stretch (basic and acidic residues) spans 772–797 (LTEHEHQQMRDDLEKEREDLDLDHSS). The span at 798 to 809 (LPRPMSSRSFPR) shows a compositional bias: low complexity. A phosphoserine mark is found at Ser803, Ser810, Ser814, and Ser831. The tract at residues 805–824 (RSFPRSLDDSEEEDDDDSGH) is linker. The interval 812-823 (DDSEEEDDDDSG) is important for interaction with PACS1 and PACS2. Residues 835–874 (GVSYEEFQVLVRRVDRMEHSIGSIVSKIDAVIVKLEIMER) adopt a coiled-coil conformation. A disordered region spans residues 921–970 (DDAASQISHGLGTPLGLNGQPRPRSSRPSSSQSTEGMEGGGGNGSANIHV). The segment covering 940-956 (QPRPRSSRPSSSQSTEG) has biased composition (low complexity).

Belongs to the polycystin family. As to quaternary structure, homotetramer. Component of the heterotetrameric polycystin channel complex with PKD1; the tetramer contains one PKD1 chain and three PKD2 chains. Isoform 1 interacts with PKD1 while isoform 3 does not. Interacts with PKD1L1; probably forms a Ca(2+) channel. Interacts with CD2AP. Interacts with HAX1. Interacts with NEK8. Part of a complex containing AKAP5, ADCY5, ADCY6 and PDE4C. Interacts (via C-terminus) with TRPV4 (via C-terminus). Interacts (via C-terminal acidic region) with PACS1 and PACS2; these interactions retain the protein in the endoplasmic reticulum and prevent trafficking to the cell membrane. Interacts with TMEM33. Form a heterotetramer with TRPC1 with a 2:2 stoichiometry; has distinct channel properties separate from PKD2 or TRPC1 homomers alone. Interacts with TMEM120A; TMEM120A inhibits PKD2 channel activity through the physical association of PKD2 with TMEM120A. Interacts (via N-terminus) with RYR2; regulates RYR2 channel activity. Post-translationally, N-glycosylated. The four subunits in a tetramer probably differ in the extent of glycosylation; simultaneous glycosylation of all experimentally validated sites would probably create steric hindrance. Phosphorylated. Phosphorylation is important for protein function; a mutant that lacks the N-terminal phosphorylation sites cannot complement a zebrafish pkd2-deficient mutant. PKD-mediated phosphorylation at the C-terminus regulates its function in the release of Ca(2+) stores from the endoplasmic reticulum. Phosphorylation at Ser-814 regulates PKD2 trafficking. Phosphorylation at Ser-76 is required for PKD2 trafficking to or retention at the lateral plasma membrane. Phosphorylation at Ser-803, Ser-814 and Ser-831 regulates PKD2 channel activity. In terms of processing, sumoylated by SUMO1; sumoylation regulates PKD2 membrane recycling and is necessary for intravascular pressure-induced arterial contractility. Expressed in mesenchymally derived structures in the developing embryo at day 12.5. In adult, mostly expressed in kidney.

The protein localises to the cell projection. It localises to the cilium membrane. The protein resides in the endoplasmic reticulum membrane. Its subcellular location is the cell membrane. It is found in the basolateral cell membrane. The protein localises to the cytoplasmic vesicle membrane. It localises to the golgi apparatus. The protein resides in the vesicle. Its subcellular location is the secreted. It is found in the extracellular exosome. The catalysed reaction is K(+)(in) = K(+)(out). It carries out the reaction Na(+)(in) = Na(+)(out). The enzyme catalyses Ca(2+)(in) = Ca(2+)(out). With respect to regulation, channel activity is regulated by phosphorylation. Channel activity is regulated by intracellular Ca(2+). At the endoplasmic reticulum membrane (ER), TMEM33 enhances its channel activity. TMEM120A inhibits the channel activity of PKD2, and mediates mechanosensitivity of the PKD2-TMEM120A channel complex. PKD1/PKD2 complex on the plasma membrane is activated by PKD1 N-terminus. In terms of biological role, forms a nonselective cation channel. Can function as a homotetrameric ion channel or can form heteromer with PKD1. Displays distinct function depending on its subcellular localization and regulation by its binding partners. Functions as a cation channel, with a preference for monovalent cations over divalent cations that allows K(+), Na(+) and Ca(2+) influx, with low selectivity for Ca(2+). Involved in fluid-flow mechanosensation in the primary cilium in renal epithelium. In the endoplasmic reticulum, likely functions as a K(+) channel to facilitate Ca(2+) release. The heterotetrameric PKD1/PKD2 channel has higher Ca(2+) permeability than homomeric PKD2 channel and acts as a primarily Ca(2+)-permeable channel. Interacts with and acts as a regulator of a number of other channels, such as TRPV4, TRPC1, IP3R, RYR2, ultimately further affecting intracellular signaling, to modulate intracellular Ca(2+) signaling. Together with TRPV4, forms mechano- and thermosensitive channels in cilium. In cardiomyocytes, PKD2 modulates Ca(2+) release from stimulated RYR2 receptors through direct association. Also involved in left-right axis specification via its role in sensing nodal flow; forms a complex with PKD1L1 in cilia to facilitate flow detection in left-right patterning. Acts as a regulator of cilium length together with PKD1. Mediates systemic blood pressure and contributes to the myogenic response in cerebral arteries though vasoconstriction. This Bos taurus (Bovine) protein is Polycystin-2.